The following is a 194-amino-acid chain: CMRF35-like molecule 5 (194 aa).

Positions 1-18 are cleaved as a signal peptide; the sequence is MWLSPSLLLLILPGYSIA. The Ig-like V-type domain maps to 19–125; that stretch reads AKITGPTTVN…LGVKVQVTIN (107 aa). Residues 19-165 lie on the Extracellular side of the membrane; it reads AKITGPTTVN…LTRSPLKSTH (147 aa). Residue Asn28 is glycosylated (N-linked (GlcNAc...) asparagine). Cys39 and Cys107 are oxidised to a cystine. Residues 166–186 form a helical membrane-spanning segment; sequence FLFLFLLELPLLLSMLGTVLW. Residues 187 to 194 are Cytoplasmic-facing; sequence VNRPQRRS.

The protein belongs to the CD300 family. Forms complexes with the CD300 family members with exception of CD300c. N-glycosylated. In terms of tissue distribution, expression seems restricted to cells of myeloid lineage.

It localises to the cell membrane. The sequence is that of CMRF35-like molecule 5 (CD300LD) from Homo sapiens (Human).